A 76-amino-acid chain; its full sequence is Exodeoxyribonuclease 7 small subunit (76 aa).

The protein belongs to the XseB family. In terms of assembly, heterooligomer composed of large and small subunits.

The protein localises to the cytoplasm. It carries out the reaction Exonucleolytic cleavage in either 5'- to 3'- or 3'- to 5'-direction to yield nucleoside 5'-phosphates.. Bidirectionally degrades single-stranded DNA into large acid-insoluble oligonucleotides, which are then degraded further into small acid-soluble oligonucleotides. This chain is Exodeoxyribonuclease 7 small subunit, found in Geobacillus thermodenitrificans (strain NG80-2).